We begin with the raw amino-acid sequence, 845 residues long: Beta-galactosidase 11 (845 aa).

Residues 1-26 (MRKHSLDRWLLTAVLVVLLSSSSSFA) form the signal peptide. Residue asparagine 104 is glycosylated (N-linked (GlcNAc...) asparagine). The active-site Proton donor is the glutamate 197. Residue glutamate 268 is the Nucleophile of the active site. N-linked (GlcNAc...) asparagine glycosylation is found at asparagine 269, asparagine 300, asparagine 395, asparagine 752, asparagine 784, and asparagine 814. The region spanning 751–840 (DNVSLTATLK…KMLAVQVKCG (90 aa)) is the SUEL-type lectin domain.

It belongs to the glycosyl hydrolase 35 family.

It is found in the secreted. The protein localises to the extracellular space. It localises to the apoplast. The catalysed reaction is Hydrolysis of terminal non-reducing beta-D-galactose residues in beta-D-galactosides.. The polypeptide is Beta-galactosidase 11 (BGAL11) (Arabidopsis thaliana (Mouse-ear cress)).